Reading from the N-terminus, the 687-residue chain is Dictomallein (687 aa).

Disordered regions lie at residues 1 to 45 (MGNG…SRRL) and 73 to 112 (TAGGAAPLTPAVASPAGPTGSTPGSTPGATTAPAPSSTSA). Positions 233–501 (PVFGTDADVQ…QAWIASRVLA (269 aa)) constitute a Peptidase M66 domain. H393 serves as a coordination point for Zn(2+). The active site involves E394. 2 residues coordinate Zn(2+): H397 and H403.

The protein belongs to the dictomallein family. The cofactor is Zn(2+).

In Burkholderia pseudomallei (strain 668), this protein is Dictomallein (dtmL).